We begin with the raw amino-acid sequence, 421 residues long: NADH-quinone oxidoreductase subunit F (421 aa).

The tract at residues 1 to 25 (MLKEEDKIFTNLHGQQSHDLKSSKK) is disordered. The segment covering 16–25 (QSHDLKSSKK) has biased composition (basic and acidic residues). 54 to 63 (GRGGAGFSTG) lines the NAD(+) pocket. 166-213 (GAGAYICGEETALLESLEGKKGMPRLKPPFPAGFGLYGCPTTINNVES) serves as a coordination point for FMN. Cysteine 344, cysteine 347, cysteine 350, and cysteine 390 together coordinate [4Fe-4S] cluster.

Belongs to the complex I 51 kDa subunit family. It depends on FMN as a cofactor. [4Fe-4S] cluster serves as cofactor.

The enzyme catalyses a quinone + NADH + 5 H(+)(in) = a quinol + NAD(+) + 4 H(+)(out). NDH-1 shuttles electrons from NADH, via FMN and iron-sulfur (Fe-S) centers, to quinones in the respiratory chain. Couples the redox reaction to proton translocation (for every two electrons transferred, four hydrogen ions are translocated across the cytoplasmic membrane), and thus conserves the redox energy in a proton gradient. The chain is NADH-quinone oxidoreductase subunit F (nuoF) from Rickettsia massiliae (strain Mtu5).